We begin with the raw amino-acid sequence, 633 residues long: Putative oligopeptide transporter HI_0561 (633 aa).

Helical transmembrane passes span 8–28 (GVTFASSIPAAVISMAVLKFF), 45–65 (SAGTLSSVIFVLPGLLMMGYW), 70–90 (FWQTMLICAAGGTLGVLFTIP), 128–148 (IAYGGVLAGLVAFLTNGLRVM), 180–200 (IGIVGGIAMLIGVILTWGVAV), 230–250 (IGVGTIGIAAIWTLLILMKPM), 281–301 (MIYILIATVALIVISLHHFIA), 311–331 (ILLVVVCTFLAVFIGFFVAAA), 345–365 (PISGIGIISVIVISLVLVSIG), 379–399 (FLTALTLFTASIVITTACISN), 420–440 (VALIIGCFVGALVIAPVLEIL), 483–503 (WTYILTGVGLGAVLITIDAFL), 515–535 (VIAVGIGIYLPPSINTPVIVG), 564–584 (LFSAGLIVGESLMGVILAFII), and 604–624 (WDTIGEWFGLIVFIVGIVIFA).

This sequence belongs to the oligopeptide OPT transporter family.

It localises to the cell membrane. The sequence is that of Putative oligopeptide transporter HI_0561 from Haemophilus influenzae (strain ATCC 51907 / DSM 11121 / KW20 / Rd).